The chain runs to 439 residues: Proline--tRNA ligase (439 aa).

Belongs to the class-II aminoacyl-tRNA synthetase family. ProS type 2 subfamily. In terms of assembly, homodimer.

The protein resides in the cytoplasm. The catalysed reaction is tRNA(Pro) + L-proline + ATP = L-prolyl-tRNA(Pro) + AMP + diphosphate. Its function is as follows. Catalyzes the attachment of proline to tRNA(Pro) in a two-step reaction: proline is first activated by ATP to form Pro-AMP and then transferred to the acceptor end of tRNA(Pro). This is Proline--tRNA ligase from Rhodopseudomonas palustris (strain BisA53).